The sequence spans 489 residues: Aspartyl/glutamyl-tRNA(Asn/Gln) amidotransferase subunit B (489 aa).

This sequence belongs to the GatB/GatE family. GatB subfamily. Heterotrimer of A, B and C subunits.

The catalysed reaction is L-glutamyl-tRNA(Gln) + L-glutamine + ATP + H2O = L-glutaminyl-tRNA(Gln) + L-glutamate + ADP + phosphate + H(+). The enzyme catalyses L-aspartyl-tRNA(Asn) + L-glutamine + ATP + H2O = L-asparaginyl-tRNA(Asn) + L-glutamate + ADP + phosphate + 2 H(+). Allows the formation of correctly charged Asn-tRNA(Asn) or Gln-tRNA(Gln) through the transamidation of misacylated Asp-tRNA(Asn) or Glu-tRNA(Gln) in organisms which lack either or both of asparaginyl-tRNA or glutaminyl-tRNA synthetases. The reaction takes place in the presence of glutamine and ATP through an activated phospho-Asp-tRNA(Asn) or phospho-Glu-tRNA(Gln). In Polynucleobacter asymbioticus (strain DSM 18221 / CIP 109841 / QLW-P1DMWA-1) (Polynucleobacter necessarius subsp. asymbioticus), this protein is Aspartyl/glutamyl-tRNA(Asn/Gln) amidotransferase subunit B.